Consider the following 92-residue polypeptide: Dolichol-phosphate mannosyltransferase subunit 3 (92 aa).

The next 2 helical transmembrane spans lie at 8-28 (LWAL…ALGL) and 37-57 (VLWP…LGTV).

It belongs to the DPM3 family. In terms of assembly, component of the dolichol-phosphate mannose (DPM) synthase complex composed of DPM1, DPM2 and DPM3; within the complex, associates with DPM1 via its C-terminal domain and with DPM2 via its N-terminal portion. This interaction stabilizes DPM1 protein.

The protein localises to the endoplasmic reticulum membrane. The protein operates within protein modification; protein glycosylation. Functionally, stabilizer subunit of the dolichol-phosphate mannose (DPM) synthase complex; tethers catalytic subunit DPM1 to the endoplasmic reticulum. The chain is Dolichol-phosphate mannosyltransferase subunit 3 (DPM3) from Bos taurus (Bovine).